The chain runs to 329 residues: PTS-dependent dihydroxyacetone kinase 1, dihydroxyacetone-binding subunit DhaK (329 aa).

Residues Gly-7–Trp-329 enclose the DhaK domain. Dihydroxyacetone-binding positions include Gly-53 to His-56, Lys-104, and Asp-109. His-56 functions as the Proton acceptor in the catalytic mechanism. Residue His-218 is the Tele-hemiaminal-histidine intermediate of the active site.

In terms of assembly, homodimer. The dihydroxyacetone kinase complex is composed of a homodimer of DhaM, a homodimer of DhaK and the subunit DhaL.

It localises to the cytoplasm. The catalysed reaction is dihydroxyacetone + phosphoenolpyruvate = dihydroxyacetone phosphate + pyruvate. It functions in the pathway polyol metabolism; glycerol degradation. Its function is as follows. Dihydroxyacetone binding subunit of the dihydroxyacetone kinase, which is responsible for the phosphoenolpyruvate (PEP)-dependent phosphorylation of dihydroxyacetone via a phosphoryl group transfer from DhaL-ATP. The sequence is that of PTS-dependent dihydroxyacetone kinase 1, dihydroxyacetone-binding subunit DhaK from Listeria innocua serovar 6a (strain ATCC BAA-680 / CLIP 11262).